Consider the following 420-residue polypeptide: Serine palmitoyltransferase (420 aa).

The segment covering 1–21 (MKHNLQDNLQGEQMANTNSNG) has biased composition (polar residues). Positions 1–25 (MKHNLQDNLQGEQMANTNSNGGKKP) are disordered. Residues 132-133 (GM), H233, T261, and S263 contribute to the pyridoxal 5'-phosphate site. K264 bears the N6-(pyridoxal phosphate)lysine mark.

This sequence belongs to the class-II pyridoxal-phosphate-dependent aminotransferase family. Homodimer. Pyridoxal 5'-phosphate is required as a cofactor.

It is found in the cytoplasm. The protein resides in the cell inner membrane. The catalysed reaction is L-serine + hexadecanoyl-CoA + H(+) = 3-oxosphinganine + CO2 + CoA. It participates in lipid metabolism; sphingolipid metabolism. With respect to regulation, significantly inhibited by palmitoyl-CoA concentrations greater than 100 uM. Catalyzes the condensation of L-serine with palmitoyl-CoA (hexadecanoyl-CoA) to produce 3-oxosphinganine. This chain is Serine palmitoyltransferase, found in Bacteriovorax stolpii (Bdellovibrio stolpii).